An 809-amino-acid chain; its full sequence is Probable replication endonuclease from prophage-like region (809 aa).

Catalysis depends on O-(5'-phospho-DNA)-tyrosine intermediate residues tyrosine 503 and tyrosine 507.

The protein belongs to the phage GPA family.

Functionally, possible endonuclease which induces a single-strand cut and initiates DNA replication. The protein is Probable replication endonuclease from prophage-like region of Salmonella typhimurium (strain LT2 / SGSC1412 / ATCC 700720).